The primary structure comprises 361 residues: T-box-containing protein TBX6L (361 aa).

Positions 36–209 (LWMKFHQIGT…NNPFAKGFRE (174 aa)) form a DNA-binding region, T-box. Disordered regions lie at residues 203 to 259 (FAKG…VKEE) and 280 to 323 (HAFP…QLPS). 2 stretches are compositionally biased toward basic and acidic residues: residues 206-220 (GFRE…EGRA) and 234-259 (KLPE…VKEE). The span at 280 to 290 (HAFPAASPAPA) shows a compositional bias: low complexity.

The protein localises to the nucleus. Its function is as follows. May be involved in regulating somitogenesis. This chain is T-box-containing protein TBX6L (TBX6L), found in Gallus gallus (Chicken).